Here is a 132-residue protein sequence, read N- to C-terminus: uncharacterized protein (132 aa).

Positions 113-132 (LDPQSPLHSPPLSTSPDSRR) are disordered.

This is an uncharacterized protein from Saccharomyces cerevisiae (strain ATCC 204508 / S288c) (Baker's yeast).